The following is a 1020-amino-acid chain: P3N-PIPO polyprotein (1020 aa).

A Peptidase S30 domain is found at 165 to 308 (RMSEASLQLF…KKQSNEIIHY (144 aa)). Catalysis depends on for P1 proteinase activity residues His216, Asp225, and Ser259. Residues 360–363 (KITC) carry the Involved in interaction with stylet and aphid transmission motif. The Involved in virions binding and aphid transmission motif lies at 618 to 620 (PTK). In terms of domain architecture, Peptidase C6 spans 644–766 (MFIAKAGYCY…DSNMKTYLVG (123 aa)). Residues Cys652 and His725 each act as for helper component proteinase activity in the active site.

Belongs to the potyviridae P3N-PIPO polyprotein family. In terms of assembly, interacts (via PIPO domain) with host PCaP1 protein; this interaction may help to anchor the movement complex to the plasma membrane from which the complex could move to the plasmodesmata. Potyviral RNA is expressed as two polyproteins which undergo post-translational proteolytic processing. Genome polyprotein is processed by NIa-pro, P1 and HC-pro proteinases resulting in the production of at least ten individual proteins. P3N-PIPO is cleaved by P1 and HC-pro proteinases resulting in the production of three individual proteins. The P1 proteinase and the HC-pro cleave only their respective C-termini autocatalytically.

The protein localises to the host cell junction. It is found in the host plasmodesma. The enzyme catalyses Hydrolyzes a Gly-|-Gly bond at its own C-terminus, commonly in the sequence -Tyr-Xaa-Val-Gly-|-Gly, in the processing of the potyviral polyprotein.. Functionally, required for aphid transmission and also has proteolytic activity. Only cleaves a Gly-Gly dipeptide at its own C-terminus. Interacts with virions and aphid stylets. Acts as a suppressor of RNA-mediated gene silencing, also known as post-transcriptional gene silencing (PTGS), a mechanism of plant viral defense that limits the accumulation of viral RNAs. May have RNA-binding activity. Allows efficient cell to cell propagation, by bypassing the host cell wall barrier. Transports viral genome to neighboring plant cells directly through plasmosdesmata, without any budding. This chain is P3N-PIPO polyprotein, found in Plum pox potyvirus (isolate NAT) (PPV).